The following is a 185-amino-acid chain: MELVVTSRETDKKSLLKKIRQTGGIPAVIYSGGKSLANIVVDAHVFSKFLSSLESGALSSTIFSLSYEGRTIKALVKDIQYHVTSYRVIHLDFEELIEDRDVKLKIPIRCINAVDCVGVKLGGSLRQVIRALRVVCKPKDIVPYLELDVRSLGLSQTRKLSDIQIPAGLRPITPLKEVAVTVSRR.

This sequence belongs to the bacterial ribosomal protein bL25 family. CTC subfamily. In terms of assembly, part of the 50S ribosomal subunit; part of the 5S rRNA/L5/L18/L25 subcomplex. Contacts the 5S rRNA. Binds to the 5S rRNA independently of L5 and L18.

This is one of the proteins that binds to the 5S RNA in the ribosome where it forms part of the central protuberance. The chain is Large ribosomal subunit protein bL25 from Chlamydia abortus (strain DSM 27085 / S26/3) (Chlamydophila abortus).